The chain runs to 453 residues: Midnolin (453 aa).

The Ubiquitin-like domain occupies 20 to 94; it reads MNLNIQSTTG…LTLLPSVEAG (75 aa). 4 disordered regions span residues 185 to 219, 231 to 256, 330 to 374, and 390 to 434; these read HLAS…TTSV, PCAE…RSRK, SQAR…QTEN, and QKRL…IDFE. 2 stretches are compositionally biased toward low complexity: residues 188–204 and 239–252; these read SCTP…PTAS and SSRG…SASS. Residues 330 to 362 show a composition bias toward polar residues; sequence SQARNPKATSPQSSEPQQTTHPVGHCQAQTRTC. Positions 365–374 are enriched in basic and acidic residues; it reads SGDRLRQTEN. Basic residues predominate over residues 390 to 399; the sequence is QKRLRRKARR. A compositionally biased stretch (low complexity) spans 415–428; the sequence is RTSSNSSTSSGEGS.

It localises to the nucleus. Its subcellular location is the cytoplasm. The protein resides in the cytosol. It is found in the nucleolus. Functionally, facilitates ubiquitin-independent proteasomal degradation of polycomb protein CBX4. Plays a role in inhibiting the activity of glucokinase GCK and both glucose-induced and basal insulin secretion. This is Midnolin (midn) from Xenopus tropicalis (Western clawed frog).